We begin with the raw amino-acid sequence, 1196 residues long: MSVQFIRGTAVADLEAPLIQATKQWLEEDAQHEVFYLVPNHIKFEQEIQVLQKLRQLQTTTSDSITSTRLQVFSFYRLAWYYLQHTPFYSADVLSDAGAAMIFRKILVEAEEELQIFRGEINKPGFIQQLFQLYQEMREGNIEIAELYPFLEKQTENPKGQDLQLKFQDLTLIFTRFQLQMSQYGYESAEIIQHLSEYLQTVDLSNVQFVISGYQQFTARELKLIEVLMAQAGSVKVALLLDKQYPHDLPDPRSLFYEAGQTYHQLYQLARQKQIPILSDYVEKKEVLITNPDLQGLNDYWIQSQEHLPPLSTADWRGDGLFLWRAENVKEELTHVATEIRRLVVEEGYRYKEIQVLTRDLDCYENLLEPIFAEHEIPVYVDRDMAMDRHPLVEWIESLFAIHSYNYRYRDVLRFLRTELFMPMNQLATSEESLTDWLNQRNAWRRKVDITENVVLAYGYEGYYWSQEKDWEFIRYDFEAEEQEDVATMEEESNAIRQSLQRLLPSYFQAMISAKTGLEAATVFYHFLLQSGVATQLKMWRLQAIEAGQLETARNHEQTWDALMSLLDEYVTVYGESSFDFTTFQEIFVSGLEGLHYSKVPTAIDQVQVRAMDLTRPGAAKVTFAIGMTEEIFPQKIENKTLLSDEERQTINDTLTENQYLRGTTGRKIAQEPYVAYLVFSSARERLYLTYPSVKDTAQEVKPSPYFKNIQKDLNLPVFEKNETTIFDDETTSLAHISTYRTLIGELTRLKRQRKETQEGLLPFWLNMEKALMNQSIAPLAKQVFESLTHQNIPEKIDEVLAEPLYGKDIYTSVSRMESFYRCQYQYFSRYGLRLKERDVFGLSPAATGEFFHEALDQFFKLLIMNQRNLSELTDQEVNLLAEEVLNSILGDARFSVLTTSSRMNYIRYQLSQTIKKVSWALKRQSQRSGMTTVQTEVLFGQIAAKKGISGLELPLKNQGKIHVRGKIDRIDQLVTPESTYLGVIDYKSSHRKFNMTEAYYGLAMQMLTYLDVALMDAVQLVGQEAKPAGSLYLHVHNPTLSYEGKDDIEQQMLKKYQFDGLLMKDPDLLDHLDTSLQAKQSSLLFPIEESAKEQIKPGRRQEDKFVTEPELGALLSHNRNKFIEAGNQIIGGEVQLNPAYQGKERIACRYCPFRSVCDFDVMLKENNYHRIENLSKEEIMARLLNKDEEGATEDE.

Residues cysteine 823, cysteine 1149, cysteine 1152, and cysteine 1158 each coordinate [4Fe-4S] cluster.

This sequence belongs to the helicase family. AddB/RexB type 2 subfamily. As to quaternary structure, heterodimer of AddA and RexB. It depends on Mg(2+) as a cofactor. The cofactor is [4Fe-4S] cluster.

In terms of biological role, the heterodimer acts as both an ATP-dependent DNA helicase and an ATP-dependent, dual-direction single-stranded exonuclease. Recognizes the chi site generating a DNA molecule suitable for the initiation of homologous recombination. This subunit has 5' -&gt; 3' nuclease activity but not helicase activity. The sequence is that of ATP-dependent helicase/deoxyribonuclease subunit B from Enterococcus faecalis (strain ATCC 700802 / V583).